Here is a 229-residue protein sequence, read N- to C-terminus: Putative N-acetylmannosamine-6-phosphate 2-epimerase (229 aa).

It belongs to the NanE family.

It carries out the reaction an N-acyl-D-glucosamine 6-phosphate = an N-acyl-D-mannosamine 6-phosphate. The protein operates within amino-sugar metabolism; N-acetylneuraminate degradation; D-fructose 6-phosphate from N-acetylneuraminate: step 3/5. In terms of biological role, converts N-acetylmannosamine-6-phosphate (ManNAc-6-P) to N-acetylglucosamine-6-phosphate (GlcNAc-6-P). The chain is Putative N-acetylmannosamine-6-phosphate 2-epimerase from Salmonella arizonae (strain ATCC BAA-731 / CDC346-86 / RSK2980).